We begin with the raw amino-acid sequence, 47 residues long: Antimicrobial peptide LCI (47 aa).

The protein localises to the secreted. Its function is as follows. Has antibacterial activity against X.oryzae pv oryzae and R.solanacearum, but not E.coli or P.carotovorum subsp carotovorum. May bind DNA or mRNA. This Bacillus subtilis protein is Antimicrobial peptide LCI.